Reading from the N-terminus, the 388-residue chain is Proteasomal ubiquitin receptor ADRM1 homolog rpn1302 (388 aa).

Positions 15–132 constitute a Pru domain; it reads RGKYGLVSVK…SLINQLIADP (118 aa). Disordered stretches follow at residues 202–227 and 368–388; these read RASSESNLNGPHATAGENGEDHEEAT and SDGEVEEEGDVEMRESNEKDE. Positions 368–377 are enriched in acidic residues; it reads SDGEVEEEGD. Positions 378–388 are enriched in basic and acidic residues; sequence VEMRESNEKDE.

This sequence belongs to the ADRM1 family. Component of the 19S proteasome regulatory particle complex. The 2 S.pombe rpn13 homologs, rpn1301 and rpn1302 are present at a 0.2-1 ratio.

The protein resides in the cytoplasm. It localises to the nucleus. Its function is as follows. Component of the 26S proteasome, a multiprotein complex involved in the ATP-dependent degradation of ubiquitinated proteins. This complex plays a key role in the maintenance of protein homeostasis by removing misfolded or damaged proteins, which could impair cellular functions, and by removing proteins whose functions are no longer required. Therefore, the proteasome participates in numerous cellular processes, including cell cycle progression, apoptosis, or DNA damage repair. Within the complex, functions as a proteasomal ubiquitin receptor. This Schizosaccharomyces pombe (strain 972 / ATCC 24843) (Fission yeast) protein is Proteasomal ubiquitin receptor ADRM1 homolog rpn1302 (rpn1302).